An 898-amino-acid chain; its full sequence is Chitin synthase 1 (898 aa).

The tract at residues 1–154 (MDPRYGAQPM…PPQQGGGIQR (154 aa)) is disordered. Positions 9–21 (PMPPRRSPSPGHP) are enriched in pro residues. 2 stretches are compositionally biased toward polar residues: residues 64-75 (DHLSLNAAQSVD) and 136-146 (DVPSEQYQDPP). Transmembrane regions (helical) follow at residues 441–461 (SAFG…YVAL), 540–560 (RWLN…LDFL), 570–590 (FAFF…WFAI), 616–636 (ILGV…FVLS), and 651–671 (MCWF…FISV). The N-linked (GlcNAc...) asparagine glycan is linked to Asn-685. A run of 4 helical transmembrane segments spans residues 697–717 (MLII…LIML), 726–746 (FAQY…YAFC), 825–845 (GVVL…LSSA), and 870–890 (IVLW…MWFL).

This sequence belongs to the chitin synthase family. Class I subfamily.

It localises to the cell membrane. It carries out the reaction [(1-&gt;4)-N-acetyl-beta-D-glucosaminyl](n) + UDP-N-acetyl-alpha-D-glucosamine = [(1-&gt;4)-N-acetyl-beta-D-glucosaminyl](n+1) + UDP + H(+). Functionally, polymerizes chitin, a structural polymer of the cell wall and septum, by transferring the sugar moiety of UDP-GlcNAc to the non-reducing end of the growing chitin polymer. Shows additive effects in septum formation with CHS2, CHS3A, CHS4, CHS5, CHS6 and CHS7. Regulates mycelial growth and conidiation. Involved in virulence and mediates mycotoxin deoxinivalenol (DON) biosynthesis via the regulation of the expression of TRI4, TRI5 and TRI6. This is Chitin synthase 1 from Gibberella zeae (strain ATCC MYA-4620 / CBS 123657 / FGSC 9075 / NRRL 31084 / PH-1) (Wheat head blight fungus).